The chain runs to 400 residues: Large envelope protein (400 aa).

The residue at position 1 (methionine 1) is an N-acetylmethionine. Disordered regions lie at residues 1 to 24 (MGGW…PLGF) and 89 to 116 (PAMP…RDSH). Glycine 2 carries the N-myristoyl glycine; by host lipid modification. Residues 2–119 (GGWSSKPRKG…PPLRDSHPQA (118 aa)) are pre-S1. Residues 2-174 (GGWSSKPRKG…SSRIGDPAPN (173 aa)) are pre-S. The Virion surface; in external conformation portion of the chain corresponds to 2-181 (GGWSSKPRKG…APNMENITSG (180 aa)). Residues 2 to 253 (GGWSSKPRKG…PGYRWMCLRR (252 aa)) are Intravirion; in internal conformation-facing. Tryptophan 4 carries N-linked (GlcNAc...) asparagine glycosylation. Residues 96-106 (STNRQSGRQPT) show a composition bias toward polar residues. A pre-S2 region spans residues 120 to 174 (MQWNSTAFHQALQDPRVRGLYFPAGGSSSGTLNPVPTIASHISSISSRIGDPAPN). The helical transmembrane segment at 182–202 (FLGPLLVLQAGFFLLTRILTI) threads the bilayer. Residues 203–253 (PQSLDSWWTSLNFLGGAPVCLGQNSQSPTSNHSPTSCPPICPGYRWMCLRR) are Intravirion; in external conformation-facing. The chain crosses the membrane as a helical span at residues 254-274 (FIIFLFILLLCLIFLLVLLDY). Residues 275 to 348 (QGMLPVCPLI…WASVRFSWLS (74 aa)) lie on the Virion surface side of the membrane. Asparagine 320 carries N-linked (GlcNAc...) asparagine; by host glycosylation. A helical transmembrane segment spans residues 349 to 369 (LLVPFVQWFVGLSPTVWLSAI). The Intravirion segment spans residues 370–375 (WMMWYW). The chain crosses the membrane as a helical span at residues 376-398 (GPSLYNILSPFIPLLPIFFCLWV). Topologically, residues 399–400 (YI) are virion surface.

Belongs to the orthohepadnavirus major surface antigen family. In its internal form (Li-HBsAg), interacts with the capsid protein and with the isoform S. Interacts with host chaperone CANX. In terms of assembly, associates with host chaperone CANX through its pre-S2 N glycan; this association may be essential for isoform M proper secretion. As to quaternary structure, interacts with isoform L. Interacts with the antigens of satellite virus HDV (HDVAgs); this interaction is required for encapsidation of HDV genomic RNA. In terms of processing, isoform M is N-terminally acetylated by host at a ratio of 90%, and N-glycosylated by host at the pre-S2 region. Myristoylated.

Its subcellular location is the virion membrane. In terms of biological role, the large envelope protein exists in two topological conformations, one which is termed 'external' or Le-HBsAg and the other 'internal' or Li-HBsAg. In its external conformation the protein attaches the virus to cell receptors and thereby initiating infection. This interaction determines the species specificity and liver tropism. This attachment induces virion internalization predominantly through caveolin-mediated endocytosis. The large envelope protein also assures fusion between virion membrane and endosomal membrane. In its internal conformation the protein plays a role in virion morphogenesis and mediates the contact with the nucleocapsid like a matrix protein. Functionally, the middle envelope protein plays an important role in the budding of the virion. It is involved in the induction of budding in a nucleocapsid independent way. In this process the majority of envelope proteins bud to form subviral lipoprotein particles of 22 nm of diameter that do not contain a nucleocapsid. This Hepatitis B virus genotype A1 subtype adw (isolate Philippines/pFDW294/1988) (HBV-A) protein is Large envelope protein.